A 74-amino-acid chain; its full sequence is Large ribosomal subunit protein bL27c (74 aa).

Belongs to the bacterial ribosomal protein bL27 family.

It localises to the plastid. It is found in the chloroplast. The polypeptide is Large ribosomal subunit protein bL27c (rpl27) (Calyptrosphaera sphaeroidea).